Reading from the N-terminus, the 384-residue chain is Probable intron-encoded endonuclease Cox1-I1b (384 aa).

The protein belongs to the LAGLIDADG endonuclease family.

It is found in the mitochondrion. In terms of biological role, probable mitochondrial DNA endonuclease involved in intron homing. This chain is Probable intron-encoded endonuclease Cox1-I1b (cox1-I1b), found in Schizosaccharomyces pombe (strain 972 / ATCC 24843) (Fission yeast).